The following is an 834-amino-acid chain: Unextended protein (834 aa).

The signal sequence occupies residues 1–20 (MNTYFISFITIIIFANGING). The Extracellular portion of the chain corresponds to 21–182 (TSVDTSNKLL…DFLKIKTFEP (162 aa)). N-linked (GlcNAc...) asparagine glycans are attached at residues Asn-38, Asn-42, and Asn-156. Residues 182–361 (PLIPVWLAII…NDVNDLDKNE (180 aa)) form the CNNM transmembrane domain. A helical transmembrane segment spans residues 183–203 (LIPVWLAIIIIVTCLGFSALF). The Cytoplasmic segment spans residues 204–244 (SGLNLGLMSMDRTELKILRNTGTEKEKKYASKIAPVRDQGN). The chain crosses the membrane as a helical span at residues 245-265 (YLLCSILLGNVLVNSTFTILL). The Extracellular segment spans residues 266-267 (DG). The helical transmembrane segment at 268–288 (LTSGLFAVIFSTLAIVLFGEI) threads the bilayer. The Cytoplasmic portion of the chain corresponds to 289–298 (TPQAVCSRHG). The helical transmembrane segment at 299–319 (LAIGAKTILVTKTVMAITAPL) threads the bilayer. The Extracellular portion of the chain corresponds to 320 to 834 (SYPVSRILDK…DKFESKQSKP (515 aa)). CBS domains follow at residues 380–441 (MTHI…NTPL) and 448–515 (YQNP…IVDE). N-linked (GlcNAc...) asparagine glycosylation occurs at Asn-522. An a nucleoside 3',5'-cyclic phosphate-binding site is contributed by 604–656 (YIFTQGKAVDFFVLILEGRVEVTIGKEALMFESGPFTYFGTQALVPNVVIDSP). The disordered stretch occupies residues 739–765 (CFAQNQSTRRLSNRSINSSPTNMNRSP). A compositionally biased stretch (polar residues) spans 740–763 (FAQNQSTRRLSNRSINSSPTNMNR). N-linked (GlcNAc...) asparagine glycans are attached at residues Asn-743, Asn-751, and Asn-790. Residues 807 to 834 (SGEQDTTAASMPLLPKLDDKFESKQSKP) form a disordered region. Residues 822-834 (KLDDKFESKQSKP) are compositionally biased toward basic and acidic residues.

The protein belongs to the ACDP family. As to quaternary structure, interacts with PRL-1, possibly at the plasma membrane.

It is found in the cell membrane. In terms of biological role, probable metal transporter. Acts downstream of PRL-1 and protects the nervous system against olfactory carbon dioxide stimulation. This is Unextended protein from Drosophila melanogaster (Fruit fly).